The primary structure comprises 424 residues: Serine/threonine-protein kinase H1 (424 aa).

G2 carries N-myristoyl glycine lipidation. Residue C3 is the site of S-palmitoyl cysteine attachment. The segment at 56–80 (SQYAHPCPGPPTAGHTEPPSEPPRR) is disordered. Residues 98 to 355 (YDIKALIGRG…ALQALRHPWV (258 aa)) enclose the Protein kinase domain. ATP-binding positions include 104 to 112 (IGRGSFSRV) and K127. D218 serves as the catalytic Proton acceptor. A disordered region spans residues 378-407 (RASSRCQSTKSAQSTRSSRSTRSNKSRRVR). Residues S380 and S381 each carry the phosphoserine; by autocatalysis modification. The segment covering 385-398 (STKSAQSTRSSRST) has biased composition (low complexity).

It belongs to the protein kinase superfamily. CAMK Ser/Thr protein kinase family. As to quaternary structure, homodimer. Autophosphorylated on serine residues. In terms of processing, myristoylated. Required for membrane association. Prerequisite for palmitoylation to occur. Post-translationally, palmitoylated. In terms of tissue distribution, expressed in all tissues and cell lines tested with the highest level of abundance in testis.

It localises to the golgi apparatus. It is found in the cytoplasm. The protein resides in the cytoskeleton. Its subcellular location is the microtubule organizing center. The protein localises to the centrosome. It localises to the nucleus speckle. It is found in the endoplasmic reticulum membrane. The protein resides in the cell membrane. It carries out the reaction L-seryl-[protein] + ATP = O-phospho-L-seryl-[protein] + ADP + H(+). The enzyme catalyses L-threonyl-[protein] + ATP = O-phospho-L-threonyl-[protein] + ADP + H(+). Activity depends on Ca(2+) concentration. Serine/threonine protein kinase that may be involved in the regulation of pre-mRNA processing. It may phosphorylate components of nuclear splice factor compartments (SFC), such as non-snRNP splicing factors containing a serine/arginine-rich domain (SR proteins). Reversible phosphorylation of SR proteins may cause their release into the nucleoplasm and change their local concentration, thereby influencing alternative splicing. This chain is Serine/threonine-protein kinase H1 (PSKH1), found in Homo sapiens (Human).